Here is a 1425-residue protein sequence, read N- to C-terminus: Death-associated protein kinase dapk-1 (1425 aa).

Residues 28-289 (YEIETELGSG…VEECLQHPWI (262 aa)) form the Protein kinase domain. ATP is bound by residues 34 to 42 (LGSGQFAVV) and K57. The active-site Proton acceptor is the D155. ANK repeat units lie at residues 392–421 (NGAT…NICA), 425–454 (NGDT…DVDS), 458–487 (TGET…RLDL), 491–520 (SGDT…PLHL), 524–553 (REET…PIDA), 557–586 (DGKT…DINH), 590–619 (HGDT…TVDS), 623–652 (NKKT…DVTL), 810–841 (GGYE…DPTE), and 934–963 (IGMK…ILDT). Residues 695–950 (LDTSLRRIKL…MELAKCRTNI (256 aa)) enclose the Roc domain. In terms of domain architecture, Death spans 1308 to 1389 (ELACLLDPPH…DARDALYRTV (82 aa)).

It belongs to the protein kinase superfamily. CAMK Ser/Thr protein kinase family. DAP kinase subfamily. In terms of assembly, interacts with ptrn-1. Mg(2+) is required as a cofactor. In terms of tissue distribution, expressed in epidermis, muscles and neurons.

It localises to the cytoplasm. The protein resides in the cytosol. Its subcellular location is the cytoskeleton. It carries out the reaction L-seryl-[protein] + ATP = O-phospho-L-seryl-[protein] + ADP + H(+). It catalyses the reaction L-threonyl-[protein] + ATP = O-phospho-L-threonyl-[protein] + ADP + H(+). Its function is as follows. Negative regulator of epidermal barrier repair and innate immune responses to wounding. The role in epidermal tissue integrity and wound healing is established through the inhibition of epidermal microtubule stability, possibly via the negative regulation of the microtubule minus-end binding protein ptrn-1. In epidermis, prevents expression of specific unc-44 isoforms probably by promoting nuclear localization of pinn-1, which in turn may affect sydn-1-ssup-72-mediated regulation of alternative polyadenylation of unc-44 mRNA. Appears to act downstream of or in parallel to muscarinic signaling in the regulation of autophagy. This Caenorhabditis elegans protein is Death-associated protein kinase dapk-1.